Here is a 493-residue protein sequence, read N- to C-terminus: Putative lon protease homolog (493 aa).

Residue 52-59 (GPPGVGKS) coordinates ATP.

This sequence belongs to the peptidase S16 family.

This Thermoplasma acidophilum (strain ATCC 25905 / DSM 1728 / JCM 9062 / NBRC 15155 / AMRC-C165) protein is Putative lon protease homolog.